The sequence spans 140 residues: ATP synthase epsilon chain (140 aa).

This sequence belongs to the ATPase epsilon chain family. F-type ATPases have 2 components, CF(1) - the catalytic core - and CF(0) - the membrane proton channel. CF(1) has five subunits: alpha(3), beta(3), gamma(1), delta(1), epsilon(1). CF(0) has three main subunits: a, b and c.

The protein resides in the cell membrane. In terms of biological role, produces ATP from ADP in the presence of a proton gradient across the membrane. This Enterococcus hirae (strain ATCC 9790 / DSM 20160 / JCM 8729 / LMG 6399 / NBRC 3181 / NCIMB 6459 / NCDO 1258 / NCTC 12367 / WDCM 00089 / R) protein is ATP synthase epsilon chain (atpC).